We begin with the raw amino-acid sequence, 334 residues long: 7,8-didemethyl-8-hydroxy-5-deazariboflavin synthase (334 aa).

One can recognise a Radical SAM core domain in the interval 2 to 248; the sequence is VSYSKNVFVP…PDVPVQVPPN (247 aa). [4Fe-4S] cluster-binding residues include Cys16, Cys20, and Cys23.

It belongs to the radical SAM superfamily. CofG family. Consists of two subunits, CofG and CofH. It depends on [4Fe-4S] cluster as a cofactor.

The catalysed reaction is 5-amino-5-(4-hydroxybenzyl)-6-(D-ribitylimino)-5,6-dihydrouracil + S-adenosyl-L-methionine = 7,8-didemethyl-8-hydroxy-5-deazariboflavin + 5'-deoxyadenosine + L-methionine + NH4(+) + H(+). Its pathway is cofactor biosynthesis; coenzyme F0 biosynthesis. Its function is as follows. Catalyzes the radical-mediated synthesis of 7,8-didemethyl-8-hydroxy-5-deazariboflavin from 5-amino-5-(4-hydroxybenzyl)-6-(D-ribitylimino)-5,6-dihydrouracil. This Methanopyrus kandleri (strain AV19 / DSM 6324 / JCM 9639 / NBRC 100938) protein is 7,8-didemethyl-8-hydroxy-5-deazariboflavin synthase.